A 319-amino-acid polypeptide reads, in one-letter code: Acetyl-coenzyme A carboxylase carboxyl transferase subunit alpha (319 aa).

The region spanning 35 to 296 (NIDEEVHRLR…KAQLLTDLAD (262 aa)) is the CoA carboxyltransferase C-terminal domain.

Belongs to the AccA family. Acetyl-CoA carboxylase is a heterohexamer composed of biotin carboxyl carrier protein (AccB), biotin carboxylase (AccC) and two subunits each of ACCase subunit alpha (AccA) and ACCase subunit beta (AccD).

The protein resides in the cytoplasm. It carries out the reaction N(6)-carboxybiotinyl-L-lysyl-[protein] + acetyl-CoA = N(6)-biotinyl-L-lysyl-[protein] + malonyl-CoA. Its pathway is lipid metabolism; malonyl-CoA biosynthesis; malonyl-CoA from acetyl-CoA: step 1/1. Component of the acetyl coenzyme A carboxylase (ACC) complex. First, biotin carboxylase catalyzes the carboxylation of biotin on its carrier protein (BCCP) and then the CO(2) group is transferred by the carboxyltransferase to acetyl-CoA to form malonyl-CoA. The protein is Acetyl-coenzyme A carboxylase carboxyl transferase subunit alpha of Escherichia coli O45:K1 (strain S88 / ExPEC).